The primary structure comprises 357 residues: Acyl-coenzyme A diphosphatase NUDT19 (357 aa).

One can recognise a Nudix hydrolase domain in the interval 10-242 (AATVMLAAGW…IWLAPPQFYE (233 aa)). Positions 72–94 (PRFGLGPEPPRQPPFPGLSHGDA) are disordered. Over residues 78–87 (PEPPRQPPFP) the composition is skewed to pro residues. Residues 97 to 118 (AALPDDVALRICAIRETFEEAG) carry the Nudix box motif. Residues Glu112 and Glu116 each coordinate Mg(2+). The residue at position 300 (Lys300) is an N6-succinyllysine. The Microbody targeting signal motif lies at 355–357 (AHL).

It belongs to the Nudix hydrolase family. Monomer. Mg(2+) is required as a cofactor. Requires Mn(2+) as cofactor.

Its subcellular location is the peroxisome. It carries out the reaction an acyl-CoA + H2O = an acyl-4'-phosphopantetheine + adenosine 3',5'-bisphosphate + 2 H(+). It catalyses the reaction CoA + H2O = (R)-4'-phosphopantetheine + adenosine 3',5'-bisphosphate + 2 H(+). The catalysed reaction is hexanoyl-CoA + H2O = hexanoyl-4'-phosphopantetheine + adenosine 3',5'-bisphosphate + 2 H(+). The enzyme catalyses octanoyl-CoA + H2O = S-octanoyl-4'-phosphopantetheine + adenosine 3',5'-bisphosphate + 2 H(+). It carries out the reaction butanoyl-CoA + H2O = S-butanoyl-4'-phosphopantetheine + adenosine 3',5'-bisphosphate + 2 H(+). It catalyses the reaction propanoyl-CoA + H2O = propanoyl-4'-phosphopantetheine + adenosine 3',5'-bisphosphate + 2 H(+). The catalysed reaction is malonyl-CoA + H2O = malonyl-4'-phosphopantetheine + adenosine 3',5'-bisphosphate + 2 H(+). The enzyme catalyses succinyl-CoA + H2O = succinyl-4'-phosphopantetheine + adenosine 3',5'-bisphosphate + 2 H(+). It carries out the reaction choloyl-CoA + H2O = S-choloyl-4'-phosphopantetheine + adenosine 3',5'-bisphosphate + 2 H(+). It catalyses the reaction 4,8-dimethylnonanoyl-CoA + H2O = S-(4,8-dimethylnonanoyl)-4'-phosphopantetheine + adenosine 3',5'-bisphosphate + 2 H(+). The catalysed reaction is (9Z,12Z,15Z)-octadecatrienoyl-CoA + H2O = S-(9Z,12Z,15Z-octadecatrienoyl)-4'-phosphopantetheine + adenosine 3',5'-bisphosphate + 2 H(+). The enzyme catalyses (9Z,12Z)-octadecadienoyl-CoA + H2O = S-(9Z,12Z-octadecadienoyl)-4'-phosphopantetheine + adenosine 3',5'-bisphosphate + 2 H(+). It carries out the reaction (9Z)-hexadecenoyl-CoA + H2O = S-(9Z-hexadecenoyl)-4'-phosphopantetheine + adenosine 3',5'-bisphosphate + 2 H(+). It catalyses the reaction (9Z)-tetradecenoyl-CoA + H2O = S-(9Z-tetradecenoyl)-4'-phosphopantetheine + adenosine 3',5'-bisphosphate + 2 H(+). The catalysed reaction is (6Z)-octenoyl-CoA + H2O = S-(6Z-octenoyl)-4'-phosphopantetheine + adenosine 3',5'-bisphosphate + 2 H(+). The enzyme catalyses hexadecanoyl-CoA + H2O = S-hexadecanoyl-4'-phosphopantetheine + adenosine 3',5'-bisphosphate + 2 H(+). It carries out the reaction tetradecanoyl-CoA + H2O = tetradecanoyl-4'-phosphopantetheine + adenosine 3',5'-bisphosphate + 2 H(+). It catalyses the reaction dodecanoyl-CoA + H2O = S-dodecanoyl-4'-phosphopantetheine + adenosine 3',5'-bisphosphate + 2 H(+). The catalysed reaction is a 5'-end CoA-ribonucleoside in mRNA + H2O = a 5'-end phospho-adenosine-phospho-ribonucleoside in mRNA + (R)-4'-phosphopantetheine + 2 H(+). Its function is as follows. Fatty acyl-coenzyme A (CoA) diphosphatase that hydrolyzes fatty acyl-CoA to yield acyl-4'-phosphopantetheine and adenosine 3',5'-bisphosphate. Mediates the hydrolysis of a wide range of CoA esters, including choloyl-CoA and branched-chain fatty-acyl-CoA esters and at low substrate concentrations medium and long-chain fatty-acyl-CoA esters are the primary substrates. Highest activity seen with medium-chain acyl-CoA esters and higher rates of activity seen with the unsaturated acyl-CoA esters compared with the saturated esters. Exhibits decapping activity towards dpCoA-capped RNAs in vitro. The polypeptide is Acyl-coenzyme A diphosphatase NUDT19 (Nudt19) (Mus caroli (Ryukyu mouse)).